The primary structure comprises 176 residues: ATP synthase subunit b (176 aa).

The chain crosses the membrane as a helical span at residues 27-47 (FFVFSFLTLILVVTIVTLLVY).

The protein belongs to the ATPase B chain family. F-type ATPases have 2 components, F(1) - the catalytic core - and F(0) - the membrane proton channel. F(1) has five subunits: alpha(3), beta(3), gamma(1), delta(1), epsilon(1). F(0) has three main subunits: a(1), b(2) and c(10-14). The alpha and beta chains form an alternating ring which encloses part of the gamma chain. F(1) is attached to F(0) by a central stalk formed by the gamma and epsilon chains, while a peripheral stalk is formed by the delta and b chains.

Its subcellular location is the cell membrane. Its function is as follows. F(1)F(0) ATP synthase produces ATP from ADP in the presence of a proton or sodium gradient. F-type ATPases consist of two structural domains, F(1) containing the extramembraneous catalytic core and F(0) containing the membrane proton channel, linked together by a central stalk and a peripheral stalk. During catalysis, ATP synthesis in the catalytic domain of F(1) is coupled via a rotary mechanism of the central stalk subunits to proton translocation. Component of the F(0) channel, it forms part of the peripheral stalk, linking F(1) to F(0). In Metamycoplasma arthritidis (strain 158L3-1) (Mycoplasma arthritidis), this protein is ATP synthase subunit b.